A 359-amino-acid chain; its full sequence is SAGA complex subunit Spt7 (359 aa).

In terms of assembly, component of the Spt-Ada-Gcn5 acetyltransferase (SAGA) complex consisting of wda/Taf5L, Saf6, Taf9, Taf10b, Taf12, Ada1, Spt3, Spt7, Spt20, Sf3b3, Sf3b5, Nipped-A/Tra1, a histone acetyltransferase (HAT) module made up of Gcn5, Ada2b (Isoform B), Ada3 and Sgf29, and a deubiquitinase (DUB) module made up of not/nonstop, Sgf11 and e(y)2 tethered to SAGA by Atxn7. Interacts with Ada2b; the interaction is direct.

It is found in the nucleus. Component of the transcription regulatory complex SAGA, a multiprotein complex that activates transcription by remodeling chromatin and mediating histone acetylation and deubiquitination. The SAGA complex predominantly acetylates histone H3. The sequence is that of SAGA complex subunit Spt7 from Drosophila melanogaster (Fruit fly).